Reading from the N-terminus, the 233-residue chain is Antilisterial bacteriocin subtilosin biosynthesis protein AlbG (233 aa).

A run of 5 helical transmembrane segments spans residues 4–24, 46–66, 116–136, 145–165, and 192–212; these read STVF…FGWV, GLLA…LHYV, TYVM…FEIV, TPPI…LFYM, and IGWM…LAAI.

The protein resides in the cell membrane. In terms of biological role, involved in the production of the bacteriocin subtilosin. In Bacillus subtilis, this protein is Antilisterial bacteriocin subtilosin biosynthesis protein AlbG (albG).